The chain runs to 348 residues: Oxygen-dependent coproporphyrinogen-III oxidase (348 aa).

Serine 104 serves as a coordination point for substrate. Residues histidine 108 and histidine 118 each contribute to the a divalent metal cation site. Catalysis depends on histidine 118, which acts as the Proton donor. 120–122 serves as a coordination point for substrate; that stretch reads NYR. Positions 152 and 182 each coordinate a divalent metal cation. The segment at 272–307 is important for dimerization; it reads YAEFNLVWDRGTIFGLQTNGRTESILMSLPPLARWE.

It belongs to the aerobic coproporphyrinogen-III oxidase family. Homodimer. The cofactor is a divalent metal cation.

The protein localises to the cytoplasm. The catalysed reaction is coproporphyrinogen III + O2 + 2 H(+) = protoporphyrinogen IX + 2 CO2 + 2 H2O. It functions in the pathway porphyrin-containing compound metabolism; protoporphyrin-IX biosynthesis; protoporphyrinogen-IX from coproporphyrinogen-III (O2 route): step 1/1. Functionally, involved in the heme and chlorophyll biosynthesis. Catalyzes the aerobic oxidative decarboxylation of propionate groups of rings A and B of coproporphyrinogen-III to yield the vinyl groups in protoporphyrinogen-IX. This is Oxygen-dependent coproporphyrinogen-III oxidase from Prochlorococcus marinus (strain NATL1A).